The sequence spans 367 residues: Biotin synthase (367 aa).

One can recognise a Radical SAM core domain in the interval 73-308 (CCGNTVDLCS…EQIIRYAGGR (236 aa)). Positions 91, 95, and 98 each coordinate [4Fe-4S] cluster. [2Fe-2S] cluster is bound by residues Cys136, Cys173, Cys233, and Arg303.

This sequence belongs to the radical SAM superfamily. Biotin synthase family. In terms of assembly, homodimer. [4Fe-4S] cluster is required as a cofactor. It depends on [2Fe-2S] cluster as a cofactor.

It carries out the reaction (4R,5S)-dethiobiotin + (sulfur carrier)-SH + 2 reduced [2Fe-2S]-[ferredoxin] + 2 S-adenosyl-L-methionine = (sulfur carrier)-H + biotin + 2 5'-deoxyadenosine + 2 L-methionine + 2 oxidized [2Fe-2S]-[ferredoxin]. Its pathway is cofactor biosynthesis; biotin biosynthesis; biotin from 7,8-diaminononanoate: step 2/2. Catalyzes the conversion of dethiobiotin (DTB) to biotin by the insertion of a sulfur atom into dethiobiotin via a radical-based mechanism. This chain is Biotin synthase, found in Picosynechococcus sp. (strain ATCC 27264 / PCC 7002 / PR-6) (Agmenellum quadruplicatum).